Reading from the N-terminus, the 904-residue chain is Putative pentatricopeptide repeat-containing protein At1g19290 (904 aa).

19 PPR repeats span residues 154–188 (SPTV…GRIP), 189–223 (SLLS…EVSP), 224–254 (DVFT…TESS), 260–294 (NVVT…GVSR), 295–329 (NVVT…KLVA), 330–364 (DQHM…GVRT), 365–399 (NTTI…SLKP), 400–434 (DHHT…EVVP), 435–469 (TVMT…GVNA), 470–504 (DEIS…GLLT), 505–539 (DTIT…RCKP), 540–574 (AVQT…GIFP), 575–609 (TIEM…GLTP), 610–644 (TVAT…GITL), 645–679 (NVNI…DLLL), 718–753 (NNIV…RFIP), 754–788 (DEYT…GIIP), 789–823 (NIVT…GITP), and 824–858 (NAIT…GLVR).

This sequence belongs to the PPR family. P subfamily.

The chain is Putative pentatricopeptide repeat-containing protein At1g19290 from Arabidopsis thaliana (Mouse-ear cress).